Consider the following 130-residue polypeptide: Large ribosomal subunit protein bL20 (130 aa).

This sequence belongs to the bacterial ribosomal protein bL20 family.

Binds directly to 23S ribosomal RNA and is necessary for the in vitro assembly process of the 50S ribosomal subunit. It is not involved in the protein synthesizing functions of that subunit. The polypeptide is Large ribosomal subunit protein bL20 (Clavibacter michiganensis subsp. michiganensis (strain NCPPB 382)).